The chain runs to 211 residues: 3-demethoxyubiquinol 3-hydroxylase (211 aa).

Fe cation is bound by residues Glu60, Glu90, His93, Glu142, Glu174, and His177.

It belongs to the COQ7 family. Fe cation serves as cofactor.

Its subcellular location is the cell membrane. The catalysed reaction is a 5-methoxy-2-methyl-3-(all-trans-polyprenyl)benzene-1,4-diol + AH2 + O2 = a 3-demethylubiquinol + A + H2O. The protein operates within cofactor biosynthesis; ubiquinone biosynthesis. In terms of biological role, catalyzes the hydroxylation of 2-nonaprenyl-3-methyl-6-methoxy-1,4-benzoquinol during ubiquinone biosynthesis. The protein is 3-demethoxyubiquinol 3-hydroxylase of Francisella tularensis subsp. novicida (strain U112).